The sequence spans 379 residues: Alkanesulfonate monooxygenase (379 aa).

The protein belongs to the SsuD family.

It carries out the reaction an alkanesulfonate + FMNH2 + O2 = an aldehyde + FMN + sulfite + H2O + 2 H(+). Its function is as follows. Catalyzes the desulfonation of aliphatic sulfonates. The polypeptide is Alkanesulfonate monooxygenase (Pseudomonas syringae pv. syringae (strain B728a)).